Consider the following 618-residue polypeptide: Serine/threonine-protein kinase pkn1 (618 aa).

The 367-residue stretch at 15-381 (YKILCYLRKG…KEEVKPQPLF (367 aa)) folds into the Protein kinase domain. Residues 21-29 (LRKGLWCQD) and Lys44 contribute to the ATP site.

Belongs to the protein kinase superfamily. Ser/Thr protein kinase family. Post-translationally, autophosphorylated on serine and threonine residues.

It carries out the reaction L-seryl-[protein] + ATP = O-phospho-L-seryl-[protein] + ADP + H(+). The enzyme catalyses L-threonyl-[protein] + ATP = O-phospho-L-threonyl-[protein] + ADP + H(+). Functionally, together with the serine/threonine kinase PknD, may play a role in the specific interactions with host proteins during intracellular growth. The polypeptide is Serine/threonine-protein kinase pkn1 (pkn1) (Chlamydia caviae (strain ATCC VR-813 / DSM 19441 / 03DC25 / GPIC) (Chlamydophila caviae)).